The chain runs to 315 residues: Protoheme IX farnesyltransferase (315 aa).

9 consecutive transmembrane segments (helical) span residues 32–52, 53–73, 93–113, 120–140, 153–173, 180–200, 226–246, 249–269, and 295–315; these read VMSL…GHMN, PVLA…SGAL, IPAG…LSAF, LMVN…YAVI, IVIG…AATG, LVLF…LSLF, ALFY…MGFA, FYGV…WRLW, and IFAV…FGVF.

This sequence belongs to the UbiA prenyltransferase family. Protoheme IX farnesyltransferase subfamily.

The protein localises to the cell inner membrane. The enzyme catalyses heme b + (2E,6E)-farnesyl diphosphate + H2O = Fe(II)-heme o + diphosphate. The protein operates within porphyrin-containing compound metabolism; heme O biosynthesis; heme O from protoheme: step 1/1. Converts heme B (protoheme IX) to heme O by substitution of the vinyl group on carbon 2 of heme B porphyrin ring with a hydroxyethyl farnesyl side group. This is Protoheme IX farnesyltransferase from Brucella suis (strain ATCC 23445 / NCTC 10510).